The primary structure comprises 79 residues: Small ribosomal subunit protein bS18 (79 aa).

This sequence belongs to the bacterial ribosomal protein bS18 family. Part of the 30S ribosomal subunit. Forms a tight heterodimer with protein bS6.

Its function is as follows. Binds as a heterodimer with protein bS6 to the central domain of the 16S rRNA, where it helps stabilize the platform of the 30S subunit. The polypeptide is Small ribosomal subunit protein bS18 (Salinispora arenicola (strain CNS-205)).